Here is a 290-residue protein sequence, read N- to C-terminus: Agmatinase (290 aa).

Histidine 112, aspartate 135, histidine 137, aspartate 139, aspartate 216, and aspartate 218 together coordinate Mn(2+).

This sequence belongs to the arginase family. Agmatinase subfamily. It depends on Mn(2+) as a cofactor.

The catalysed reaction is agmatine + H2O = urea + putrescine. The protein operates within amine and polyamine biosynthesis; putrescine biosynthesis via agmatine pathway; putrescine from agmatine: step 1/1. Its function is as follows. Catalyzes the formation of putrescine from agmatine. In Bacillus subtilis (strain 168), this protein is Agmatinase (speB).